Consider the following 79-residue polypeptide: UPF0181 protein PC1_1931 (79 aa).

A disordered region spans residues 54–79; sequence FDEDDDTVNDSDEEHYFDDGEEEDEQ.

The protein belongs to the UPF0181 family.

In Pectobacterium carotovorum subsp. carotovorum (strain PC1), this protein is UPF0181 protein PC1_1931.